Reading from the N-terminus, the 200-residue chain is Cuticle protein 19.8 (200 aa).

3 consecutive repeat copies span residues 20–23 (AAPA), 26–29 (AAPA), and 43–46 (AAPA). The Chitin-binding type R&amp;R domain maps to 56–127 (HPQYSYGYSV…EPGVHAPIAA (72 aa)). The interval 70-89 (TGDSKSQQESRDGDVVQGSY) is disordered. 5 consecutive repeat copies span residues 126–129 (AAPV), 144–147 (AAPA), 150–153 (AAPV), 159–162 (AAPA), and 177–180 (AAPA).

In terms of biological role, component of the cuticle of migratory locust which contains more than 100 different structural proteins. This chain is Cuticle protein 19.8, found in Locusta migratoria (Migratory locust).